Here is a 646-residue protein sequence, read N- to C-terminus: 1-deoxy-D-xylulose-5-phosphate synthase (646 aa).

Thiamine diphosphate contacts are provided by residues His86 and 127–129 (AHS). Position 158 (Asp158) interacts with Mg(2+). Thiamine diphosphate-binding positions include 159–160 (GA), Asn188, Tyr295, and Glu377. A Mg(2+)-binding site is contributed by Asn188.

It belongs to the transketolase family. DXPS subfamily. As to quaternary structure, homodimer. Requires Mg(2+) as cofactor. Thiamine diphosphate serves as cofactor.

The catalysed reaction is D-glyceraldehyde 3-phosphate + pyruvate + H(+) = 1-deoxy-D-xylulose 5-phosphate + CO2. It functions in the pathway metabolic intermediate biosynthesis; 1-deoxy-D-xylulose 5-phosphate biosynthesis; 1-deoxy-D-xylulose 5-phosphate from D-glyceraldehyde 3-phosphate and pyruvate: step 1/1. Functionally, catalyzes the acyloin condensation reaction between C atoms 2 and 3 of pyruvate and glyceraldehyde 3-phosphate to yield 1-deoxy-D-xylulose-5-phosphate (DXP). The polypeptide is 1-deoxy-D-xylulose-5-phosphate synthase (Burkholderia ambifaria (strain ATCC BAA-244 / DSM 16087 / CCUG 44356 / LMG 19182 / AMMD) (Burkholderia cepacia (strain AMMD))).